The chain runs to 314 residues: MASSDETIFDLPPYIRSRKTPFFPLCFPSLNDPETGVSWKDVPISSQVSVRIYLPKITDHEKGEKLPILVYVHGAGFCLESAFKSFFHTYVKHFVTEAKAIVVSVEFRLAPEHHLPSAYEDCWEALQWVASHVGLDTSSLKTSIDKDPWIINYGDFERLYLWGDSTGANIVHNILIRAGKEKLKGGVKILGAILYYPYFLIRTSSKQSDYMENEYRSYWKLAYPNAPGGNDNLMINPTAENGPDLRGYGCSRLLVSMVADEARDITLLYIDALERSGWKGELDVADFEGDYFEIFSPDTELGKNKLRRSTSFIR.

The short motif at 73 to 75 is the Involved in the stabilization of the negatively charged intermediate by the formation of the oxyanion hole element; sequence HGA. Catalysis depends on residues Ser165 and Asp260.

It belongs to the 'GDXG' lipolytic enzyme family.

The protein operates within alkaloid biosynthesis. In terms of biological role, component of the seco-iridoid and derivatives monoterpenoid indole alkaloids (MIAs, e.g. vincadifformine) biosynthesis pathway. Catalyzes the conversion of O-acetylstemmadenine (OAS) to vincadifformine. May also trigger the formation of additional unknown MIAs. The polypeptide is Hydrolase 4 (Catharanthus roseus (Madagascar periwinkle)).